A 101-amino-acid polypeptide reads, in one-letter code: Small ribosomal subunit protein uS14 (101 aa).

Belongs to the universal ribosomal protein uS14 family. As to quaternary structure, part of the 30S ribosomal subunit. Contacts proteins S3 and S10.

Binds 16S rRNA, required for the assembly of 30S particles and may also be responsible for determining the conformation of the 16S rRNA at the A site. This chain is Small ribosomal subunit protein uS14, found in Neisseria gonorrhoeae (strain ATCC 700825 / FA 1090).